A 243-amino-acid chain; its full sequence is Small ribosomal subunit protein uS3 (243 aa).

The 69-residue stretch at 39-107 (LRKLISKELQ…KIKLNIKEIH (69 aa)) folds into the KH type-2 domain. The disordered stretch occupies residues 212–243 (VAKSPAEPATTAPTPAPERRERQPRRNSNASA).

This sequence belongs to the universal ribosomal protein uS3 family. Part of the 30S ribosomal subunit. Forms a tight complex with proteins S10 and S14.

In terms of biological role, binds the lower part of the 30S subunit head. Binds mRNA in the 70S ribosome, positioning it for translation. This chain is Small ribosomal subunit protein uS3, found in Chloroflexus aurantiacus (strain ATCC 29364 / DSM 637 / Y-400-fl).